Here is a 516-residue protein sequence, read N- to C-terminus: MLEKTTLKNIILIHFLMFLAVVTAQTAPDEDTSAITRCTAEGTNPVRETDIPNPVNVGTIDDRSCYANYKESTVYGKTWGVYNITFDSNDFDTSLQPRIERSLSRSSETGIGSYARLTGVFRILEVGDTSGTSQDGTYLAQAKGKHTGGGGSPDPAICLYLAKPVYGTGEDADKQVSFDIYAERILYRGGEGDGREIVFLKNVKKDEETNFELEVGFKEDPNDVSKKIQYCNAVIGGDTFNWNIPEPERGTESGIRYGAYRVKGGRAQIRWANTTYQKVENVEVTNPGPIGDVYKLKNVATGQYLSDSGVSASAVIMSDSGEAQNNYWTFVESGSLFNIDNETFGILRAPGAGGPGGAYVVVSTTKEGPSSDGDKVWTIHYNESNDTYRFESGSSGRFMYQEINGNVTHISAMNTDDRSVWKAIAVESLSVDENAILASDVRVFPNPASDSFTISLKTINHVTVNIYDVLGNTIFKSEFNGDTIQIRNKGQFKAGVYLIQLTDKNNNKYHKKLIVK.

An N-terminal signal peptide occupies residues 1–24 (MLEKTTLKNIILIHFLMFLAVVTA). Cysteine 38 and cysteine 65 are joined by a disulfide. Glycine 42, asparagine 44, aspartate 62, serine 64, alanine 67, and asparagine 68 together coordinate Ca(2+). Tyrosine 138 is a binding site for substrate. Residue lysine 143 is the Proton acceptor of the active site. Substrate-binding positions include 191 to 195 (EGDGR) and 260 to 263 (YRVK). Catalysis depends on tyrosine 260, which acts as the Proton donor/acceptor. Positions 289–429 (PIGDVYKLKN…VWKAIAVESL (141 aa)) are ulvan-binding domain. Residues 430–516 (SVDENAILAS…NKYHKKLIVK (87 aa)) constitute a propeptide, removed by the type IX secretion system (T9SS).

This sequence belongs to the polysaccharide lyase 28 family. Ca(2+) is required as a cofactor.

The protein resides in the secreted. Its function is as follows. Ulvan lyase involved in ulvan degradation. Ulvan is the main polysaccharide component of the Ulvales (green seaweed) cell wall. It is composed of disaccharide building blocks comprising 3-sulfated rhamnose (Rha3S) linked to D-glucuronic acid (GlcA), L-iduronic acid (IduA), or D-xylose (Xyl). Ulvan lyase catalyzes the endolytic cleavage of the glycosidic bond between Rha3S and the uronic acids GlcA or IduA, producing oligosaccharides that have unsaturated 4-deoxy-L-threo-hex-4-enopyranosiduronic acid (deltaUA) at the non-reducing end. This results eventually in the degradation of the ulvan polysaccharide into deltaUA-Rha3S disaccharides and deltaUA-Rha3S-Xyl-Rha3S tetrasaccharides. This is Endo-acting ulvan lyase from Formosa agariphila (strain DSM 15362 / KCTC 12365 / LMG 23005 / KMM 3901 / M-2Alg 35-1).